Reading from the N-terminus, the 394-residue chain is MDSQGRKVVVCDNGTGFVKCGYAGSNFPEHIFPALVGRPIIRSTTKVGNIEIKDLMVGDEASELRSMLEVNYPMENGIVRNWDDMKHLWDYTFGPEKLNIDTRSCKILLTEPPMNPTKNREKIVEVMFETYQFSGVYVAIQAVLTLYAQGLLTGVVVDSGDGVTHICPVYEGFSLPHLTRRLDIAGRDITRYLIKLLLLRGYAFNHSADFETVRMIKEKLCYVGYNIEQEQKLALETTVLVESYTLPDGRIIKVGGERFEAPEALFQPHLINVEGVGVAELLFNTIQAADIDTRSEFYKHIVLSGGSTMYPGLPSRLERELKQLYLERVLKGDVEKLSKFKIRIEDPPRRKHMVFLGGAVLADIMKDKDNFWMTRQEYQEKGVRVLEKLGVTVR.

At Met1 the chain carries N-acetylmethionine. Residues 160 to 162 (GDG) and 214 to 218 (RMIKE) contribute to the ATP site. Lys299 is modified (N6-acetyllysine). 305–310 (GGSTMY) is an ATP binding site. Lys322 is modified (N6-acetyllysine).

The protein belongs to the actin family. ARP2 subfamily. In terms of assembly, component of the Arp2/3 complex composed of ACTR2/ARP2, ACTR3/ARP3, ARPC1B/p41-ARC, ARPC2/p34-ARC, ARPC3/p21-ARC, ARPC4/p20-ARC and ARPC5/p16-ARC.

Its subcellular location is the cytoplasm. The protein resides in the cytoskeleton. The protein localises to the cell projection. It localises to the nucleus. Functionally, ATP-binding component of the Arp2/3 complex, a multiprotein complex that mediates actin polymerization upon stimulation by nucleation-promoting factor (NPF). The Arp2/3 complex mediates the formation of branched actin networks in the cytoplasm, providing the force for cell motility. Seems to contact the pointed end of the daughter actin filament. In addition to its role in the cytoplasmic cytoskeleton, the Arp2/3 complex also promotes actin polymerization in the nucleus, thereby regulating gene transcription and repair of damaged DNA. The Arp2/3 complex promotes homologous recombination (HR) repair in response to DNA damage by promoting nuclear actin polymerization, leading to drive motility of double-strand breaks (DSBs). This is Actin-related protein 2 (Actr2) from Rattus norvegicus (Rat).